The following is a 283-amino-acid chain: Bifunctional protein FolD (283 aa).

NADP(+) is bound by residues glycine 165 to glycine 167, threonine 192, and valine 233.

Belongs to the tetrahydrofolate dehydrogenase/cyclohydrolase family. Homodimer.

The catalysed reaction is (6R)-5,10-methylene-5,6,7,8-tetrahydrofolate + NADP(+) = (6R)-5,10-methenyltetrahydrofolate + NADPH. It catalyses the reaction (6R)-5,10-methenyltetrahydrofolate + H2O = (6R)-10-formyltetrahydrofolate + H(+). It participates in one-carbon metabolism; tetrahydrofolate interconversion. Catalyzes the oxidation of 5,10-methylenetetrahydrofolate to 5,10-methenyltetrahydrofolate and then the hydrolysis of 5,10-methenyltetrahydrofolate to 10-formyltetrahydrofolate. The protein is Bifunctional protein FolD of Mycolicibacterium smegmatis (strain ATCC 700084 / mc(2)155) (Mycobacterium smegmatis).